A 336-amino-acid polypeptide reads, in one-letter code: D-alanine--D-alanine ligase (336 aa).

The region spanning 124-330 (KMWFSALGIP…FATFLEQAIL (207 aa)) is the ATP-grasp domain. 154–209 (AFDEWGSVFIKAASQGSSVGCFPAHRREDIPGLVRKAFEYAPFVVVEKTIKARELE) provides a ligand contact to ATP. Residues Asp284, Glu297, and Asn299 each coordinate Mg(2+).

This sequence belongs to the D-alanine--D-alanine ligase family. It depends on Mg(2+) as a cofactor. Mn(2+) serves as cofactor.

The protein resides in the cytoplasm. It catalyses the reaction 2 D-alanine + ATP = D-alanyl-D-alanine + ADP + phosphate + H(+). Its pathway is cell wall biogenesis; peptidoglycan biosynthesis. Its function is as follows. Cell wall formation. This is D-alanine--D-alanine ligase from Shewanella amazonensis (strain ATCC BAA-1098 / SB2B).